The following is a 764-amino-acid chain: Thyrotropin receptor (764 aa).

The first 21 residues, 1–21 (MRPTPLLRLALLLVLPSSLWG), serve as a signal peptide directing secretion. Residues 22 to 413 (ERCPSPPCEC…EFNPCEDIMG (392 aa)) lie on the Extracellular side of the membrane. An intrachain disulfide couples Cys31 to Cys41. The stretch at 51–74 (PPSTQTLKFIETHLKTIPSRAFSN) is one LRR 1 repeat. 2 N-linked (GlcNAc...) asparagine glycosylation sites follow: Asn77 and Asn99. LRR repeat units follow at residues 125-150 (LPLL…IYST), 152-174 (VFFI…AFQG), 176-199 (SNET…AFNG), 201-223 (KLDA…AFAG), and 225-248 (YSGP…GLEH). Residues Asn177 and Asn198 are each glycosylated (N-linked (GlcNAc...) asparagine). N-linked (GlcNAc...) asparagine glycosylation occurs at Asn302. Tyr385 carries the post-translational modification Sulfotyrosine. The chain crosses the membrane as a helical span at residues 414 to 441 (YKFLRIVVWFVSLLALLGNVFVLVILLT). Topologically, residues 442 to 450 (SHYKLTVPR) are cytoplasmic. The helical transmembrane segment at 451-473 (FLMCNLAFADFCMGLYLLLIASV) threads the bilayer. Residues 474-494 (DLYTQSEYYNHAIDWQTGPGC) are Extracellular-facing. Cys494 and Cys569 are joined by a disulfide. Residues 495–517 (NTAGFFTVFASELSVYTLTVITL) traverse the membrane as a helical segment. The Cytoplasmic segment spans residues 518–537 (ERWYAITFAMHLDRKIRLWH). The chain crosses the membrane as a helical span at residues 538–560 (AYVIMLGGWVCCFLLALLPLVGI). Topologically, residues 561-580 (SSYAKVSICLPMDTETPLAL) are extracellular. A helical transmembrane segment spans residues 581–602 (AYIILVLLLNIIAFIIVCACYV). The Cytoplasmic segment spans residues 603-625 (KIYITVRNPHYNPGDKDTRIAKR). The chain crosses the membrane as a helical span at residues 626-649 (MAVLIFTDFMCMAPISFYALSALM). Residues 650 to 660 (NKPLITVTNSK) are Extracellular-facing. The chain crosses the membrane as a helical span at residues 661–682 (ILLVLFYPLNSCANPFLYAIFT). Residues 683-764 (KAFQRDVFML…TSKEYKQTVL (82 aa)) are Cytoplasmic-facing. Positions 762–764 (TVL) match the PDZ-binding motif.

The protein belongs to the G-protein coupled receptor 1 family. FSH/LSH/TSH subfamily. As to quaternary structure, interacts with heterodimer GPHA2:GPHB5; this interaction stimulates cAMP production. Interacts (via the PDZ-binding motif) with SCRIB; regulates TSHR trafficking and function. In terms of processing, glycosylated. Sulfated. Sulfation on Tyr-385 plays a role in thyrotropin receptor binding and activation.

It localises to the cell membrane. It is found in the basolateral cell membrane. In terms of biological role, receptor for the thyroid-stimulating hormone (TSH) or thyrotropin. Also acts as a receptor for the heterodimeric glycoprotein hormone (GPHA2:GPHB5) or thyrostimulin. The activity of this receptor is mediated by G proteins which activate adenylate cyclase. Plays a central role in controlling thyroid cell metabolism. The polypeptide is Thyrotropin receptor (TSHR) (Ovis aries (Sheep)).